Reading from the N-terminus, the 327-residue chain is tRNA dimethylallyltransferase (327 aa).

14-21 provides a ligand contact to ATP; sequence GPTASGKT. Residue 16-21 participates in substrate binding; the sequence is TASGKT. 2 interaction with substrate tRNA regions span residues 39–42 and 163–167; these read DSAL and QRIQR.

This sequence belongs to the IPP transferase family. In terms of assembly, monomer. Mg(2+) serves as cofactor.

It catalyses the reaction adenosine(37) in tRNA + dimethylallyl diphosphate = N(6)-dimethylallyladenosine(37) in tRNA + diphosphate. Catalyzes the transfer of a dimethylallyl group onto the adenine at position 37 in tRNAs that read codons beginning with uridine, leading to the formation of N6-(dimethylallyl)adenosine (i(6)A). This chain is tRNA dimethylallyltransferase, found in Xanthomonas campestris pv. campestris (strain 8004).